Reading from the N-terminus, the 574-residue chain is Avenacosidase 1 (574 aa).

The transit peptide at 1–55 directs the protein to the chloroplast; it reads MALLCSALSNSTHPSFRSHIGANSENLWHLSADPAQKSKRRCNLTLSSRAARISS. A beta-D-glucoside contacts are provided by residues Q88, H192, and 237 to 238; that span reads NE. E238 functions as the Proton donor in the catalytic mechanism. A disulfide bond links C258 and C264. A beta-D-glucoside-binding positions include Y381, E454, W505, 512-513, and F521; that span reads EW. The Nucleophile role is filled by E454.

This sequence belongs to the glycosyl hydrolase 1 family. Homo- and heteromultimer with P60B in a 1:1 stoichiometry. Aggregates to form the fibrillar stromacentre. As to expression, expressed in caryopses, coleoptiles, primary leaves, and etiolated and green seedlings, but not in roots.

It is found in the plastid. The protein localises to the chloroplast stroma. It catalyses the reaction avenacoside B + H2O = 26-desgluco-avenacoside B + D-glucose. Inhibited by N-(3-Dimethylaminopropyl)-N'-ethylcarbodiimide hydrochloride (EDC). Functionally, beta-glucosidase acting as a preformed defense system. Hydrolyzes the bisdesmosides avenacosides A and B to 26-desgluco-avenacosides exhibiting fungicidal activity. Can use beta-fucoside &gt; beta-glucoside &gt; beta-galactoside &gt; beta-xyloside as substrates, but not alpha-glycosides, beta-thioglucosides and disaccharides. This is Avenacosidase 1 (P60A) from Avena sativa (Oat).